Here is a 361-residue protein sequence, read N- to C-terminus: Protein RecA (361 aa).

77 to 84 (GPESSGKT) contacts ATP.

The protein belongs to the RecA family.

It is found in the cytoplasm. Its function is as follows. Can catalyze the hydrolysis of ATP in the presence of single-stranded DNA, the ATP-dependent uptake of single-stranded DNA by duplex DNA, and the ATP-dependent hybridization of homologous single-stranded DNAs. It interacts with LexA causing its activation and leading to its autocatalytic cleavage. This chain is Protein RecA, found in Brucella abortus (strain S19).